A 171-amino-acid polypeptide reads, in one-letter code: Adenine phosphoribosyltransferase (171 aa).

This sequence belongs to the purine/pyrimidine phosphoribosyltransferase family. Homodimer.

It localises to the cytoplasm. It catalyses the reaction AMP + diphosphate = 5-phospho-alpha-D-ribose 1-diphosphate + adenine. The protein operates within purine metabolism; AMP biosynthesis via salvage pathway; AMP from adenine: step 1/1. Functionally, catalyzes a salvage reaction resulting in the formation of AMP, that is energically less costly than de novo synthesis. The protein is Adenine phosphoribosyltransferase of Rhodospirillum centenum (strain ATCC 51521 / SW).